We begin with the raw amino-acid sequence, 460 residues long: Bifunctional protein GlmU (460 aa).

The interval 1-230 is pyrophosphorylase; it reads MSNNYAIILA…FDESLGVNDR (230 aa). UDP-N-acetyl-alpha-D-glucosamine-binding positions include 9–12, Lys23, Gln73, and 78–79; these read LAAG and GT. Asp103 is a binding site for Mg(2+). The UDP-N-acetyl-alpha-D-glucosamine site is built by Gly140, Glu155, Asn170, and Asn228. A Mg(2+)-binding site is contributed by Asn228. The tract at residues 231-251 is linker; sequence VALATAEAVMRKRINEKHMVN. The N-acetyltransferase stretch occupies residues 252–460; the sequence is GVTFINPDAT…TRFPFHPSQK (209 aa). 2 residues coordinate UDP-N-acetyl-alpha-D-glucosamine: Arg333 and Lys351. The Proton acceptor role is filled by His363. UDP-N-acetyl-alpha-D-glucosamine-binding residues include Tyr366 and Asn377. Acetyl-CoA is bound by residues Ala380, 386–387, Ser405, Ala423, and Arg440; that span reads NY.

This sequence in the N-terminal section; belongs to the N-acetylglucosamine-1-phosphate uridyltransferase family. It in the C-terminal section; belongs to the transferase hexapeptide repeat family. In terms of assembly, homotrimer. Requires Mg(2+) as cofactor.

Its subcellular location is the cytoplasm. The enzyme catalyses alpha-D-glucosamine 1-phosphate + acetyl-CoA = N-acetyl-alpha-D-glucosamine 1-phosphate + CoA + H(+). It catalyses the reaction N-acetyl-alpha-D-glucosamine 1-phosphate + UTP + H(+) = UDP-N-acetyl-alpha-D-glucosamine + diphosphate. Its pathway is nucleotide-sugar biosynthesis; UDP-N-acetyl-alpha-D-glucosamine biosynthesis; N-acetyl-alpha-D-glucosamine 1-phosphate from alpha-D-glucosamine 6-phosphate (route II): step 2/2. The protein operates within nucleotide-sugar biosynthesis; UDP-N-acetyl-alpha-D-glucosamine biosynthesis; UDP-N-acetyl-alpha-D-glucosamine from N-acetyl-alpha-D-glucosamine 1-phosphate: step 1/1. It participates in bacterial outer membrane biogenesis; LPS lipid A biosynthesis. In terms of biological role, catalyzes the last two sequential reactions in the de novo biosynthetic pathway for UDP-N-acetylglucosamine (UDP-GlcNAc). The C-terminal domain catalyzes the transfer of acetyl group from acetyl coenzyme A to glucosamine-1-phosphate (GlcN-1-P) to produce N-acetylglucosamine-1-phosphate (GlcNAc-1-P), which is converted into UDP-GlcNAc by the transfer of uridine 5-monophosphate (from uridine 5-triphosphate), a reaction catalyzed by the N-terminal domain. In Streptococcus suis (strain 98HAH33), this protein is Bifunctional protein GlmU.